Reading from the N-terminus, the 97-residue chain is Large ribosomal subunit protein bL27 (97 aa).

Positions 1-12 (MLKMTLNNLQLF) are excised as a propeptide. The interval 13–37 (AHKKGGGSTSNGRDSQAKRLGAKAA) is disordered.

Belongs to the bacterial ribosomal protein bL27 family. In terms of processing, the N-terminus is cleaved by ribosomal processing cysteine protease Prp.

This Streptococcus pneumoniae serotype 2 (strain D39 / NCTC 7466) protein is Large ribosomal subunit protein bL27.